The following is a 423-amino-acid chain: Maltoporin 1 (423 aa).

Residues 1 to 23 form the signal peptide; the sequence is MNTTLRALSVALAAALIAPSAFA.

It belongs to the porin LamB (TC 1.B.3) family. As to quaternary structure, homotrimer formed of three 18-stranded antiparallel beta-barrels, containing three independent channels.

It is found in the cell outer membrane. It catalyses the reaction beta-maltose(in) = beta-maltose(out). Its function is as follows. Involved in the transport of maltose and maltodextrins. This chain is Maltoporin 1, found in Klebsiella pneumoniae subsp. pneumoniae (strain ATCC 700721 / MGH 78578).